The following is a 169-amino-acid chain: Keratin-associated protein 9-7 (169 aa).

17 tandem repeats follow at residues cysteine 8–threonine 12, cysteine 13–threonine 17, cysteine 32–serine 36, cysteine 37–serine 41, cysteine 46–threonine 50, cysteine 51–threonine 55, cysteine 56–threonine 60, cysteine 61–threonine 65, cysteine 75–proline 79, cysteine 80–isoleucine 84, cysteine 85–serine 89, cysteine 90–threonine 94, cysteine 100–serine 104, cysteine 139–alanine 143, cysteine 144–threonine 148, cysteine 149–threonine 153, and cysteine 163–alanine 167. The tract at residues cysteine 8–alanine 167 is 17 X 5 AA repeats of C-C-[VGSREQH]-[SQTPN]-[STPAI].

The protein belongs to the KRTAP type 9 family. In terms of assembly, interacts with hair keratins.

In terms of biological role, in the hair cortex, hair keratin intermediate filaments are embedded in an interfilamentous matrix, consisting of hair keratin-associated proteins (KRTAP), which are essential for the formation of a rigid and resistant hair shaft through their extensive disulfide bond cross-linking with abundant cysteine residues of hair keratins. The matrix proteins include the high-sulfur and high-glycine-tyrosine keratins. This Homo sapiens (Human) protein is Keratin-associated protein 9-7.